The primary structure comprises 525 residues: Probable protein kinase UbiB (525 aa).

The region spanning 119 to 501 (RFDHHPVASA…QRRTNRLLSA (383 aa)) is the Protein kinase domain. Residues 125-133 (VASASIAQV) and K151 each bind ATP. The active-site Proton acceptor is the D286. A helical membrane pass occupies residues 502–522 (ALLFIGGFAVGIIATHVLAWL).

Belongs to the ABC1 family. UbiB subfamily.

It is found in the cell inner membrane. Its pathway is cofactor biosynthesis; ubiquinone biosynthesis [regulation]. In terms of biological role, is probably a protein kinase regulator of UbiI activity which is involved in aerobic coenzyme Q (ubiquinone) biosynthesis. The chain is Probable protein kinase UbiB from Ralstonia nicotianae (strain ATCC BAA-1114 / GMI1000) (Ralstonia solanacearum).